Reading from the N-terminus, the 214-residue chain is Ribonuclease P protein component 3 (214 aa).

The protein belongs to the eukaryotic/archaeal RNase P protein component 3 family. Consists of a catalytic RNA component and at least 4-5 protein subunits. Forms a subcomplex with Rnp2 which stimulates the catalytic RNA.

It is found in the cytoplasm. It carries out the reaction Endonucleolytic cleavage of RNA, removing 5'-extranucleotides from tRNA precursor.. In terms of biological role, part of ribonuclease P, a protein complex that generates mature tRNA molecules by cleaving their 5'-ends. The RNA is catalytic, but its KM for pre-tRNA is 170-fold decreased in the presence of the 4 known protein subunits (Rnp1-4). The protein subunits also decrease the amount of Mg(2+) needed for activity. This chain is Ribonuclease P protein component 3, found in Pyrococcus furiosus (strain ATCC 43587 / DSM 3638 / JCM 8422 / Vc1).